A 574-amino-acid polypeptide reads, in one-letter code: Streptolysin O (574 aa).

An N-terminal signal peptide occupies residues 1-36 (MKDMSNKKIFKKYSRVAGLLTAALIVGNLVTANADS). The segment covering 37-52 (NKQNTANTETTTTNEQ) has biased composition (low complexity). Disordered regions lie at residues 37–64 (NKQNTANTETTTTNEQPKPESSELTTEK) and 84–111 (KEMPLESAEKEEKKSEDNKKSEEDHTEE). The segment covering 53–64 (PKPESSELTTEK) has biased composition (basic and acidic residues). The next 4 beta stranded transmembrane spans lie at 263-276 (KSQIEAALNVNSKI), 283-292 (IDFKSISKGE), 361-370 (SNDVEAAFSA), and 378-390 (KTNGKYSDILENS). The Conserved undecapeptide motif lies at 532-542 (ECTGLAWEWWR). Residues 564–565 (TL) carry the Cholesterol binding motif.

Belongs to the cholesterol-dependent cytolysin family. As to quaternary structure, homooligomeric pore complex of 35 to 50 subunits; when inserted in the host membrane.

It is found in the secreted. It localises to the host cell membrane. A cholesterol-dependent toxin that causes cytolysis by forming pores in cholesterol containing host membranes. After binding to target membranes, the protein undergoes a major conformation change, leading to its insertion in the host membrane and formation of an oligomeric pore complex. Cholesterol is required for binding to host membranes, membrane insertion and pore formation; cholesterol binding is mediated by a Thr-Leu pair in the C-terminus. Can be reversibly inactivated by oxidation. This Streptococcus dysgalactiae subsp. equisimilis (Streptococcus equisimilis) protein is Streptolysin O (slo).